We begin with the raw amino-acid sequence, 489 residues long: Tripartite motif-containing protein 10 (489 aa).

The RING-type zinc finger occupies 16-61 (CPVCQGTLREPVTIDCGHNFCRVCLTRYLEITSPDPEEPPTCPLCK). A B box-type zinc finger spans residues 94-135 (DEEDVCPEHGEKVYFFCEDDEMQLCVVCREAWEHRAHTVRFL). C99, H102, C121, and H127 together coordinate Zn(2+). Positions 142–245 (YREQIQKCLE…IEELEEKKER (104 aa)) form a coiled coil. In terms of domain architecture, B30.2/SPRY spans 292 to 486 (REMKMFLEKL…FSLSSQEGAA (195 aa)).

The protein belongs to the TRIM/RBCC family. In terms of assembly, interacts with IFNAR1; this interaction prevents association of IFNAR1 with TYK2.

The protein resides in the cytoplasm. Its function is as follows. E3 ligase that plays an essential role in the differentiation and survival of terminal erythroid cells. May directly bind to PTEN and promote its ubiquitination, resulting in its proteasomal degradation and activation of hypertrophic signaling. In addition, plays a role in immune response regulation by repressing the phosphorylation of STAT1 and STAT2 in the interferon/JAK/STAT signaling pathway independent of its E3 ligase activity. Mechanistically, interacts with the intracellular domain of IFNAR1 and thereby inhibits the association between TYK2 and IFNAR1. This is Tripartite motif-containing protein 10 (TRIM10) from Bos taurus (Bovine).